Here is a 694-residue protein sequence, read N- to C-terminus: Putative ankyrin repeat protein RBE_0921 (694 aa).

10 ANK repeats span residues 122–151 (LGKT…NINV), 155–185 (NGRN…NINS), 216–245 (FNRT…NVEA), 249–275 (TGET…NTEA), 279–317 (LGRT…NPNA), 321–350 (YGFT…KFKK), 351–382 (NRYE…NIND), 384–413 (NGQN…DNGK), 423–452 (QRNT…DINA), and 456–485 (DGET…DINI).

This chain is Putative ankyrin repeat protein RBE_0921, found in Rickettsia bellii (strain RML369-C).